A 314-amino-acid polypeptide reads, in one-letter code: Porphobilinogen deaminase (314 aa).

Cysteine 242 bears the S-(dipyrrolylmethanemethyl)cysteine mark.

It belongs to the HMBS family. As to quaternary structure, monomer. It depends on dipyrromethane as a cofactor.

The enzyme catalyses 4 porphobilinogen + H2O = hydroxymethylbilane + 4 NH4(+). It functions in the pathway porphyrin-containing compound metabolism; protoporphyrin-IX biosynthesis; coproporphyrinogen-III from 5-aminolevulinate: step 2/4. Tetrapolymerization of the monopyrrole PBG into the hydroxymethylbilane pre-uroporphyrinogen in several discrete steps. This Bacillus subtilis (strain 168) protein is Porphobilinogen deaminase (hemC).